A 584-amino-acid chain; its full sequence is Peroxynitrite isomerase THAP4 (584 aa).

The THAP-type zinc finger occupies 1–85 (MVICCAAANC…LKPTAVPSIF (85 aa)). The segment at 84 to 330 (IFHLAEKKRR…EAVQSEHSDA (247 aa)) is disordered. Positions 89–104 (EKKRRAGGHGRPRRRD) are enriched in basic residues. A compositionally biased stretch (low complexity) spans 122 to 138 (GKAAAGSPSSSSASPMA). The segment covering 158–178 (AARETAGQERGRQPLEGRAED) has biased composition (basic and acidic residues). A compositionally biased stretch (low complexity) spans 190 to 208 (GEAGTGAEDAGEEGATPAD). An HCFC1-binding motif (HBM) motif is present at residues 236–239 (LHSY). Ser240 is subject to Phosphoserine. The span at 248–267 (ERPAVPREPVERKRLRRDAE) shows a compositional bias: basic and acidic residues. The nitrobindin stretch occupies residues 422 to 584 (PPKMSPVVEP…LHVTYKKVTP (163 aa)). Residues Thr451 and His574 each coordinate heme b.

It in the C-terminal section; belongs to the nitrobindin family. In terms of assembly, homodimer. Requires heme b as cofactor.

It localises to the cytoplasm. It is found in the nucleus. It catalyses the reaction peroxynitrite = nitrate. Its pathway is nitrogen metabolism. In terms of biological role, heme-binding protein able to scavenge peroxynitrite and to protect free L-tyrosine against peroxynitrite-mediated nitration, by acting as a peroxynitrite isomerase that converts peroxynitrite to nitrate. Therefore, this protein likely plays a role in peroxynitrite sensing and in the detoxification of reactive nitrogen and oxygen species (RNS and ROS, respectively). Is able to bind nitric oxide (NO) in vitro, but may act as a sensor of peroxynitrite levels in vivo, possibly modulating the transcriptional activity residing in the N-terminal region. This Bos taurus (Bovine) protein is Peroxynitrite isomerase THAP4.